The primary structure comprises 463 residues: Tryptophan aminotransferase-related protein 4 (463 aa).

The chain crosses the membrane as a helical span at residues leucine 6–serine 26. Pyridoxal 5'-phosphate-binding positions include tyrosine 124, threonine 163–threonine 164, asparagine 239, aspartate 259–tyrosine 262, serine 282–lysine 285, and arginine 293. Lysine 285 is modified (N6-(pyridoxal phosphate)lysine).

It belongs to the alliinase family. Pyridoxal 5'-phosphate is required as a cofactor.

It localises to the membrane. In terms of biological role, probable aminotransferase. The polypeptide is Tryptophan aminotransferase-related protein 4 (TAR4) (Arabidopsis thaliana (Mouse-ear cress)).